The following is a 335-amino-acid chain: Pro-cathepsin H (335 aa).

The N-terminal stretch at 1 to 22 (MWAVLSLLCAGAWLLGPPACGA) is a signal peptide. The propeptide occupies 23–97 (SNLAVSSFEK…DEIRHKYLWS (75 aa)). Asparagine 72 and asparagine 101 each carry an N-linked (GlcNAc...) asparagine glycan. 4 disulfides stabilise this stretch: cysteine 102-cysteine 327, cysteine 138-cysteine 181, cysteine 172-cysteine 214, and cysteine 272-cysteine 322. The propeptide occupies 107-115 (GNYLRGTGP). Residue cysteine 141 is part of the active site. The N-linked (GlcNAc...) asparagine glycan is linked to asparagine 230. Residues histidine 281 and asparagine 301 contribute to the active site.

The protein belongs to the peptidase C1 family. Composed of cathepsin H and mini chain; disulfide-linked. Cathepsin H may be split into heavy and light chain. All chains are held together by disulfide bonds.

The protein localises to the lysosome. The catalysed reaction is Hydrolysis of proteins, acting as an aminopeptidase (notably, cleaving Arg-|-Xaa bonds) as well as an endopeptidase.. Functionally, important for the overall degradation of proteins in lysosomes. This chain is Pro-cathepsin H (CTSH), found in Sus scrofa (Pig).